The following is a 496-amino-acid chain: Probable cytosol aminopeptidase (496 aa).

Residues lysine 266 and aspartate 271 each contribute to the Mn(2+) site. The active site involves lysine 278. Mn(2+) contacts are provided by aspartate 289, aspartate 348, and glutamate 350. The active site involves arginine 352.

It belongs to the peptidase M17 family. Requires Mn(2+) as cofactor.

The protein resides in the cytoplasm. The catalysed reaction is Release of an N-terminal amino acid, Xaa-|-Yaa-, in which Xaa is preferably Leu, but may be other amino acids including Pro although not Arg or Lys, and Yaa may be Pro. Amino acid amides and methyl esters are also readily hydrolyzed, but rates on arylamides are exceedingly low.. It catalyses the reaction Release of an N-terminal amino acid, preferentially leucine, but not glutamic or aspartic acids.. Presumably involved in the processing and regular turnover of intracellular proteins. Catalyzes the removal of unsubstituted N-terminal amino acids from various peptides. In Pseudomonas fluorescens (strain Pf0-1), this protein is Probable cytosol aminopeptidase.